Here is a 378-residue protein sequence, read N- to C-terminus: Alcohol dehydrogenase class-3 (378 aa).

Ala-1 is subject to N-acetylalanine. A Zn(2+)-binding site is contributed by Cys-46. An NAD(+)-binding site is contributed by His-47. The an alcohol site is built by Thr-48 and His-68. Positions 68, 69, 98, 101, 104, 112, and 176 each coordinate Zn(2+). NAD(+) contacts are provided by residues 201–206 (GLGTVG), Asp-225, Lys-230, 294–296 (VGV), 319–321 (TAF), and Arg-371.

Belongs to the zinc-containing alcohol dehydrogenase family. Class-III subfamily. Homodimer. The cofactor is Zn(2+).

It is found in the cytoplasm. The enzyme catalyses a primary alcohol + NAD(+) = an aldehyde + NADH + H(+). It catalyses the reaction a secondary alcohol + NAD(+) = a ketone + NADH + H(+). It carries out the reaction S-(hydroxymethyl)glutathione + NADP(+) = S-formylglutathione + NADPH + H(+). The catalysed reaction is S-(hydroxymethyl)glutathione + NAD(+) = S-formylglutathione + NADH + H(+). Its function is as follows. Class-III ADH is remarkably ineffective in oxidizing ethanol, but it readily catalyzes the oxidation of long-chain primary alcohols and the oxidation of S-(hydroxymethyl) glutathione. This is Alcohol dehydrogenase class-3 from Pisum sativum (Garden pea).